Reading from the N-terminus, the 490-residue chain is Cobyric acid synthase (490 aa).

The 183-residue stretch at 250-432 (QLEIVVIRLP…LHGLLDNHAW (183 aa)) folds into the GATase cobBQ-type domain. Cys328 (nucleophile) is an active-site residue. His424 is an active-site residue.

It belongs to the CobB/CobQ family. CobQ subfamily.

The protein operates within cofactor biosynthesis; adenosylcobalamin biosynthesis. Its function is as follows. Catalyzes amidations at positions B, D, E, and G on adenosylcobyrinic A,C-diamide. NH(2) groups are provided by glutamine, and one molecule of ATP is hydrogenolyzed for each amidation. The protein is Cobyric acid synthase of Gloeobacter violaceus (strain ATCC 29082 / PCC 7421).